A 1168-amino-acid chain; its full sequence is DNA-directed RNA polymerase subunit beta (1168 aa).

The protein belongs to the RNA polymerase beta chain family. In terms of assembly, the RNAP catalytic core consists of 2 alpha, 1 beta, 1 beta' and 1 omega subunit. When a sigma factor is associated with the core the holoenzyme is formed, which can initiate transcription.

The catalysed reaction is RNA(n) + a ribonucleoside 5'-triphosphate = RNA(n+1) + diphosphate. Its function is as follows. DNA-dependent RNA polymerase catalyzes the transcription of DNA into RNA using the four ribonucleoside triphosphates as substrates. This Rhodococcus opacus (strain B4) protein is DNA-directed RNA polymerase subunit beta.